Consider the following 349-residue polypeptide: Quinone oxidoreductase-like protein 1 (349 aa).

This sequence belongs to the zinc-containing alcohol dehydrogenase family. Quinone oxidoreductase subfamily. In terms of assembly, homodimer. Component of the FERRY complex composed of five subunits, TBCK, PPP1R21, FERRY3, CRYZL1 and GATD1 with a ratio of 1:2:1:2:4, respectively. In terms of tissue distribution, ubiquitous.

Its subcellular location is the early endosome. In terms of biological role, component of the FERRY complex (Five-subunit Endosomal Rab5 and RNA/ribosome intermediary). The FERRY complex directly interacts with mRNAs and RAB5A, and functions as a RAB5A effector involved in the localization and the distribution of specific mRNAs most likely by mediating their endosomal transport. The complex recruits mRNAs and ribosomes to early endosomes through direct mRNA-interaction. The protein is Quinone oxidoreductase-like protein 1 (CRYZL1) of Homo sapiens (Human).